Reading from the N-terminus, the 407-residue chain is 4-hydroxybenzoate polyprenyltransferase, mitochondrial (407 aa).

Residues 1 to 20 (MAFFGLSRVSRRLLKSSVSV) constitute a mitochondrion transit peptide. 6 helical membrane-spanning segments follow: residues 137-157 (IGTW…ADPG), 162-182 (FKYM…GCTI), 210-230 (FQGI…LLQL), 254-274 (FTFW…LLGW), 279-299 (GSIA…WTLV), and 330-350 (LWLT…GFSA).

This sequence belongs to the UbiA prenyltransferase family. Mg(2+) serves as cofactor. Expressed in flowers.

The protein localises to the mitochondrion inner membrane. The catalysed reaction is an all-trans-polyprenyl diphosphate + 4-hydroxybenzoate = a 4-hydroxy-3-(all-trans-polyprenyl)benzoate + diphosphate. It participates in cofactor biosynthesis; ubiquinone biosynthesis. In terms of biological role, catalyzes the prenylation of para-hydroxybenzoate (PHB) with an all-trans polyprenyl group. Mediates the second step in the final reaction sequence of coenzyme Q (CoQ) biosynthesis, which is the condensation of the polyisoprenoid side chain with PHB, generating the first membrane-bound Q intermediate. Required for embryo development. The sequence is that of 4-hydroxybenzoate polyprenyltransferase, mitochondrial from Arabidopsis thaliana (Mouse-ear cress).